The following is a 507-amino-acid chain: Histidine ammonia-lyase (507 aa).

Residues 141 to 143 constitute a cross-link (5-imidazolinone (Ala-Gly)); sequence ASG. Position 142 is a 2,3-didehydroalanine (Ser) (Ser-142).

This sequence belongs to the PAL/histidase family. Post-translationally, contains an active site 4-methylidene-imidazol-5-one (MIO), which is formed autocatalytically by cyclization and dehydration of residues Ala-Ser-Gly.

The protein resides in the cytoplasm. It catalyses the reaction L-histidine = trans-urocanate + NH4(+). The protein operates within amino-acid degradation; L-histidine degradation into L-glutamate; N-formimidoyl-L-glutamate from L-histidine: step 1/3. The chain is Histidine ammonia-lyase from Burkholderia cenocepacia (strain ATCC BAA-245 / DSM 16553 / LMG 16656 / NCTC 13227 / J2315 / CF5610) (Burkholderia cepacia (strain J2315)).